Consider the following 162-residue polypeptide: Phosphopantetheine adenylyltransferase (162 aa).

Ser-9 is a substrate binding site. ATP-binding positions include 9–10 (SF) and His-17. Lys-41, Leu-73, and Lys-87 together coordinate substrate. Residues 88 to 90 (GLR), Glu-98, and 122 to 128 (YSFLSSS) contribute to the ATP site.

It belongs to the bacterial CoaD family. Homohexamer. The cofactor is Mg(2+).

Its subcellular location is the cytoplasm. The enzyme catalyses (R)-4'-phosphopantetheine + ATP + H(+) = 3'-dephospho-CoA + diphosphate. It participates in cofactor biosynthesis; coenzyme A biosynthesis; CoA from (R)-pantothenate: step 4/5. Reversibly transfers an adenylyl group from ATP to 4'-phosphopantetheine, yielding dephospho-CoA (dPCoA) and pyrophosphate. The protein is Phosphopantetheine adenylyltransferase of Salinispora tropica (strain ATCC BAA-916 / DSM 44818 / JCM 13857 / NBRC 105044 / CNB-440).